Reading from the N-terminus, the 75-residue chain is Small ribosomal subunit protein bS18 (75 aa).

The protein belongs to the bacterial ribosomal protein bS18 family. Part of the 30S ribosomal subunit. Forms a tight heterodimer with protein bS6.

Binds as a heterodimer with protein bS6 to the central domain of the 16S rRNA, where it helps stabilize the platform of the 30S subunit. This Idiomarina loihiensis (strain ATCC BAA-735 / DSM 15497 / L2-TR) protein is Small ribosomal subunit protein bS18.